The sequence spans 494 residues: 3-octaprenyl-4-hydroxybenzoate carboxy-lyase (494 aa).

Position 172 (Asn172) interacts with Mn(2+). Residues 175 to 177, 189 to 191, and 194 to 195 contribute to the prenylated FMN site; these read IYR, RWL, and RG. Glu238 is a binding site for Mn(2+). Asp294 (proton donor) is an active-site residue.

The protein belongs to the UbiD family. Homohexamer. It depends on prenylated FMN as a cofactor. The cofactor is Mn(2+).

It localises to the cell membrane. It carries out the reaction a 4-hydroxy-3-(all-trans-polyprenyl)benzoate + H(+) = a 2-(all-trans-polyprenyl)phenol + CO2. Its pathway is cofactor biosynthesis; ubiquinone biosynthesis. Functionally, catalyzes the decarboxylation of 3-octaprenyl-4-hydroxy benzoate to 2-octaprenylphenol, an intermediate step in ubiquinone biosynthesis. In Albidiferax ferrireducens (strain ATCC BAA-621 / DSM 15236 / T118) (Rhodoferax ferrireducens), this protein is 3-octaprenyl-4-hydroxybenzoate carboxy-lyase.